A 403-amino-acid polypeptide reads, in one-letter code: Phosphoglycerate kinase (403 aa).

Substrate-binding positions include 22 to 24 (DLN), Arg-37, 60 to 63 (HLGR), Arg-119, and Arg-156. ATP is bound by residues Lys-206, Gly-302, Glu-333, and 359–362 (GGDS).

It belongs to the phosphoglycerate kinase family. In terms of assembly, monomer.

Its subcellular location is the cytoplasm. It catalyses the reaction (2R)-3-phosphoglycerate + ATP = (2R)-3-phospho-glyceroyl phosphate + ADP. Its pathway is carbohydrate degradation; glycolysis; pyruvate from D-glyceraldehyde 3-phosphate: step 2/5. This Streptomyces griseus subsp. griseus (strain JCM 4626 / CBS 651.72 / NBRC 13350 / KCC S-0626 / ISP 5235) protein is Phosphoglycerate kinase.